Reading from the N-terminus, the 23-residue chain is VDNMVPEKQKLFQAXNGIPVHLF.

The protein belongs to the cytochrome c oxidase VIIa family. As to quaternary structure, component of the cytochrome c oxidase (complex IV, CIV), a multisubunit enzyme composed of 14 subunits. The complex is composed of a catalytic core of 3 subunits MT-CO1, MT-CO2 and MT-CO3, encoded in the mitochondrial DNA, and 11 supernumerary subunits COX4I, COX5A, COX5B, COX6A, COX6B, COX6C, COX7A, COX7B, COX7C, COX8 and NDUFA4, which are encoded in the nuclear genome. The complex exists as a monomer or a dimer and forms supercomplexes (SCs) in the inner mitochondrial membrane with NADH-ubiquinone oxidoreductase (complex I, CI) and ubiquinol-cytochrome c oxidoreductase (cytochrome b-c1 complex, complex III, CIII), resulting in different assemblies (supercomplex SCI(1)III(2)IV(1) and megacomplex MCI(2)III(2)IV(2)).

The protein localises to the mitochondrion inner membrane. It functions in the pathway energy metabolism; oxidative phosphorylation. Its function is as follows. Component of the cytochrome c oxidase, the last enzyme in the mitochondrial electron transport chain which drives oxidative phosphorylation. The respiratory chain contains 3 multisubunit complexes succinate dehydrogenase (complex II, CII), ubiquinol-cytochrome c oxidoreductase (cytochrome b-c1 complex, complex III, CIII) and cytochrome c oxidase (complex IV, CIV), that cooperate to transfer electrons derived from NADH and succinate to molecular oxygen, creating an electrochemical gradient over the inner membrane that drives transmembrane transport and the ATP synthase. Cytochrome c oxidase is the component of the respiratory chain that catalyzes the reduction of oxygen to water. Electrons originating from reduced cytochrome c in the intermembrane space (IMS) are transferred via the dinuclear copper A center (CU(A)) of subunit 2 and heme A of subunit 1 to the active site in subunit 1, a binuclear center (BNC) formed by heme A3 and copper B (CU(B)). The BNC reduces molecular oxygen to 2 water molecules using 4 electrons from cytochrome c in the IMS and 4 protons from the mitochondrial matrix. The polypeptide is Cytochrome c oxidase subunit 7A-liver, mitochondrial (Oncorhynchus mykiss (Rainbow trout)).